Consider the following 366-residue polypeptide: Capsular polysaccharide phosphotransferase LcbA (366 aa).

Belongs to the stealth family.

This Neisseria meningitidis protein is Capsular polysaccharide phosphotransferase LcbA (lcbA).